The following is a 172-amino-acid chain: Adenine phosphoribosyltransferase (172 aa).

It belongs to the purine/pyrimidine phosphoribosyltransferase family. In terms of assembly, homodimer.

The protein localises to the cytoplasm. It catalyses the reaction AMP + diphosphate = 5-phospho-alpha-D-ribose 1-diphosphate + adenine. It participates in purine metabolism; AMP biosynthesis via salvage pathway; AMP from adenine: step 1/1. Catalyzes a salvage reaction resulting in the formation of AMP, that is energically less costly than de novo synthesis. In Prochlorococcus marinus (strain MIT 9211), this protein is Adenine phosphoribosyltransferase.